The following is a 355-amino-acid chain: Magnesium-chelatase subunit ChlI (355 aa).

46–53 is a binding site for ATP; sequence GDRGTGKS. An intrachain disulfide couples cysteine 281 to cysteine 323.

The protein belongs to the Mg-chelatase subunits D/I family. In terms of assembly, the magnesium chelatase complex is a heterotrimer consisting of subunits CHLI, CHLD and CHLH.

Its subcellular location is the plastid. The protein localises to the chloroplast. It carries out the reaction protoporphyrin IX + Mg(2+) + ATP + H2O = Mg-protoporphyrin IX + ADP + phosphate + 3 H(+). The protein operates within porphyrin-containing compound metabolism; chlorophyll biosynthesis. Its activity is regulated as follows. Redox regulation; active in reducing conditions, inactive in oxidizing conditions. Thioredoxins f and m mediate the reversible reductive activation of oxidized CHLI. In terms of biological role, involved in chlorophyll biosynthesis. Catalyzes the insertion of magnesium ion into protoporphyrin IX to yield Mg-protoporphyrin IX. The magnesium-chelatase is a complex of three subunits, CHLI, CHLD and CHLH. The reaction takes place in two steps, with an ATP-dependent activation followed by an ATP-dependent chelation step. This chain is Magnesium-chelatase subunit ChlI (chlI), found in Nephroselmis olivacea (Green alga).